A 230-amino-acid chain; its full sequence is RNA-binding riboflavin kinase RibR (230 aa).

This sequence belongs to the RibR family.

It catalyses the reaction riboflavin + ATP = FMN + ADP + H(+). May be directly involved in the regulation of the rib genes. C-terminal part of RibR specifically binds to RFN of the rib leader of the riboflavin biosynthetic operon. The RFN element is a sequence within the rib-leader mRNA reported to serve as a receptor for an FMN-dependent riboswitch. Possibly, RibR produces the comodulator FMN through its own N-terminal flavokinase activity. FMN-activated RibR may stabilize the anti-anti terminator structure of RFN mRNA, causing transcription termination of the rib genes in trans. The sequence is that of RNA-binding riboflavin kinase RibR (ribR) from Bacillus subtilis (strain 168).